A 331-amino-acid chain; its full sequence is GTP 3',8-cyclase (331 aa).

The Radical SAM core domain occupies 9–233; it reads SFGRQVTYVR…TATNEHTGGP (225 aa). Residue Arg18 coordinates GTP. Residues Cys25 and Cys29 each coordinate [4Fe-4S] cluster. Tyr31 contacts S-adenosyl-L-methionine. Cys32 contacts [4Fe-4S] cluster. Arg67 is a binding site for GTP. Gly71 provides a ligand contact to S-adenosyl-L-methionine. A GTP-binding site is contributed by Thr98. Ser122 contributes to the S-adenosyl-L-methionine binding site. A GTP-binding site is contributed by Lys159. Residue Met193 coordinates S-adenosyl-L-methionine. Cys257 and Cys260 together coordinate [4Fe-4S] cluster. Position 262–264 (262–264) interacts with GTP; the sequence is RVR. A [4Fe-4S] cluster-binding site is contributed by Cys274.

This sequence belongs to the radical SAM superfamily. MoaA family. Monomer and homodimer. The cofactor is [4Fe-4S] cluster.

The catalysed reaction is GTP + AH2 + S-adenosyl-L-methionine = (8S)-3',8-cyclo-7,8-dihydroguanosine 5'-triphosphate + 5'-deoxyadenosine + L-methionine + A + H(+). It functions in the pathway cofactor biosynthesis; molybdopterin biosynthesis. In terms of biological role, catalyzes the cyclization of GTP to (8S)-3',8-cyclo-7,8-dihydroguanosine 5'-triphosphate. The protein is GTP 3',8-cyclase of Saccharophagus degradans (strain 2-40 / ATCC 43961 / DSM 17024).